The sequence spans 411 residues: Z-DNA-binding protein 1 (411 aa).

2 Z-binding domains span residues 8–70 (LSTG…SIGG) and 84–148 (SSAQ…HSRQ). Residues Lys17 and Lys43 each participate in a glycyl lysine isopeptide (Lys-Gly) (interchain with G-Cter in ubiquitin) cross-link. Positions 60 to 86 (SPEPATWSIGGAASGDGAPAIPENSSA) are disordered. 2 short sequence motifs (RIP homotypic interaction motif (RHIM)) span residues 188–205 (NSNA…REKA) and 237–261 (YIYM…LVGD). 2 disordered regions span residues 263–303 (GKHP…EGDT) and 332–411 (KGEV…LSKQ). 3 stretches are compositionally biased toward polar residues: residues 268–292 (YSFS…NMQT), 350–371 (GTSS…SMLP), and 400–411 (IESSQDTGLSKQ).

Homodimer. Interacts (via RIP homotypic interaction motif) with RIPK3; leading to RIPK3 activation and necroptosis; interaction is enhanced by CASP6. Interacts (via RIP homotypic interaction motif) with RIPK1. Component of the AIM2 PANoptosome complex, a multiprotein complex that drives inflammatory cell death (PANoptosis). In terms of assembly, (Microbial infection) Interacts (via RIP homotypic interaction motif) with murid herpesvirus protein RIR1 (via RIP homotypic interaction motif); leading to inhibition of ZBP1-dependent necroptosis. As to quaternary structure, (Microbial infection) Interacts with vaccinia virus E3 protein; leading to inhibit ZBP1-dependent necroptosis. Post-translationally, ubiquitinated; polyubiquitinated following influenza A virus (IAV) infection. In terms of processing, phosphorylated. As to expression, expressed in lung, spleen and liver. Lower levels were seen in heart, kidney and testis. Expression is greatly up-regulated in tumor stromal cells and activated macrophages.

It is found in the cytoplasm. The protein localises to the nucleus. ZBP1-dependent necroptosis is normally inhibited by RIPK1: RIPK1 inhibits the ZBP1-induced activation of RIPK3 via FADD-mediated recruitment of CASP8, which cleaves RIPK1 and limits TNF-induced necroptosis. Its function is as follows. Key innate sensor that recognizes and binds Z-RNA structures, which are produced by a number of viruses, such as herpesvirus, orthomyxovirus or flavivirus, and triggers different forms of cell death. ZBP1 acts as an essential mediator of pyroptosis, necroptosis and apoptosis (PANoptosis), an integral part of host defense against pathogens, by activating RIPK3, caspase-8 (CASP8), and the NLRP3 inflammasome. Key activator of necroptosis, a programmed cell death process in response to death-inducing TNF-alpha family members, via its ability to bind Z-RNA: once activated upon Z-RNA-binding, ZBP1 interacts and stimulates RIPK3 kinase, which phosphorylates and activates MLKL, triggering execution of programmed necrosis. In addition to TNF-induced necroptosis, necroptosis can also take place in the nucleus in response to orthomyxoviruses infection: ZBP1 recognizes and binds Z-RNA structures that are produced in infected nuclei by orthomyxoviruses, such as the influenza A virus (IAV), leading to ZBP1 activation, RIPK3 stimulation and subsequent MLKL phosphorylation, triggering disruption of the nuclear envelope and leakage of cellular DNA into the cytosol. ZBP1-dependent cell death in response to IAV infection promotes interleukin-1 alpha (IL1A) induction in an NLRP3-inflammasome-independent manner: IL1A expression is required for the optimal interleukin-1 beta (IL1B) production, and together, these cytokines promote infiltration of inflammatory neutrophils to the lung, leading to the formation of neutrophil extracellular traps. In addition to its direct role in driving necroptosis via its ability to sense Z-RNAs, also involved in PANoptosis triggered in response to bacterial infection: component of the AIM2 PANoptosome complex, a multiprotein complex that triggers PANoptosis. Also acts as the apical sensor of fungal infection responsible for activating PANoptosis. Involved in CASP8-mediated cell death via its interaction with RIPK1 but independently of its ability to sense Z-RNAs. In some cell types, also able to restrict viral replication by promoting cell death-independent responses. In response to flavivirus infection in neurons, promotes a cell death-independent pathway that restricts viral replication: together with RIPK3, promotes a death-independent transcriptional program that modifies the cellular metabolism via up-regulation expression of the enzyme ACOD1/IRG1 and production of the metabolite itaconate. Itaconate inhibits the activity of succinate dehydrogenase, generating a metabolic state in neurons that suppresses replication of viral genomes. In Mus musculus (Mouse), this protein is Z-DNA-binding protein 1.